Here is a 464-residue protein sequence, read N- to C-terminus: UDP-N-acetylmuramate--L-alanine ligase (464 aa).

An ATP-binding site is contributed by Gly-123–Thr-129.

Belongs to the MurCDEF family.

It is found in the cytoplasm. It carries out the reaction UDP-N-acetyl-alpha-D-muramate + L-alanine + ATP = UDP-N-acetyl-alpha-D-muramoyl-L-alanine + ADP + phosphate + H(+). It participates in cell wall biogenesis; peptidoglycan biosynthesis. Functionally, cell wall formation. In Carboxydothermus hydrogenoformans (strain ATCC BAA-161 / DSM 6008 / Z-2901), this protein is UDP-N-acetylmuramate--L-alanine ligase.